We begin with the raw amino-acid sequence, 344 residues long: Anthranilate phosphoribosyltransferase (344 aa).

Residues G84, 87–88, T92, 94–97, 112–120, and S124 contribute to the 5-phospho-alpha-D-ribose 1-diphosphate site; these read GD, NIST, and KHGNRSVSS. G84 contributes to the anthranilate binding site. Residue S96 coordinates Mg(2+). N115 contributes to the anthranilate binding site. Residue R170 coordinates anthranilate. Residues D229 and E230 each contribute to the Mg(2+) site.

This sequence belongs to the anthranilate phosphoribosyltransferase family. In terms of assembly, homodimer. It depends on Mg(2+) as a cofactor.

It catalyses the reaction N-(5-phospho-beta-D-ribosyl)anthranilate + diphosphate = 5-phospho-alpha-D-ribose 1-diphosphate + anthranilate. It participates in amino-acid biosynthesis; L-tryptophan biosynthesis; L-tryptophan from chorismate: step 2/5. In terms of biological role, catalyzes the transfer of the phosphoribosyl group of 5-phosphorylribose-1-pyrophosphate (PRPP) to anthranilate to yield N-(5'-phosphoribosyl)-anthranilate (PRA). In Xylella fastidiosa (strain 9a5c), this protein is Anthranilate phosphoribosyltransferase.